We begin with the raw amino-acid sequence, 199 residues long: Large ribosomal subunit protein bL25 (199 aa).

Belongs to the bacterial ribosomal protein bL25 family. CTC subfamily. In terms of assembly, part of the 50S ribosomal subunit; part of the 5S rRNA/L5/L18/L25 subcomplex. Contacts the 5S rRNA. Binds to the 5S rRNA independently of L5 and L18.

In terms of biological role, this is one of the proteins that binds to the 5S RNA in the ribosome where it forms part of the central protuberance. This Pelobacter propionicus (strain DSM 2379 / NBRC 103807 / OttBd1) protein is Large ribosomal subunit protein bL25.